The sequence spans 190 residues: U1 small nuclear ribonucleoprotein C-1 (190 aa).

The Matrin-type zinc finger occupies 4 to 36 (YYCDYCDVFLVSESPSVRKAHNSGRNHLTNVRD). Residues 57-190 (FETGGGNSTS…PDRARQLGLI (134 aa)) are disordered. The segment covering 72 to 82 (GNPPGSQPGPP) has biased composition (pro residues). Over residues 109–124 (AMLALMNGQNGMSSPG) the composition is skewed to low complexity. The span at 125 to 141 (SGPPPMRFAGPPIPNNM) shows a compositional bias: pro residues. Residues 180-190 (NPDRARQLGLI) are compositionally biased toward basic and acidic residues.

It belongs to the U1 small nuclear ribonucleoprotein C family. U1 snRNP is composed of the 7 core Sm proteins B/B', D1, D2, D3, E, F and G that assemble in a heptameric protein ring on the Sm site of the small nuclear RNA to form the core snRNP, and at least 3 U1 snRNP-specific proteins U1-70K, U1-A and U1-C. U1-C interacts with U1 snRNA and the 5' splice-site region of the pre-mRNA.

The protein resides in the nucleus. In terms of biological role, component of the spliceosomal U1 snRNP, which is essential for recognition of the pre-mRNA 5' splice-site and the subsequent assembly of the spliceosome. U1-C is directly involved in initial 5' splice-site recognition for both constitutive and regulated alternative splicing. The interaction with the 5' splice-site seems to precede base-pairing between the pre-mRNA and the U1 snRNA. Stimulates commitment or early (E) complex formation by stabilizing the base pairing of the 5' end of the U1 snRNA and the 5' splice-site region. In Puccinia graminis f. sp. tritici (strain CRL 75-36-700-3 / race SCCL) (Black stem rust fungus), this protein is U1 small nuclear ribonucleoprotein C-1.